A 464-amino-acid chain; its full sequence is MILANVFCLFFFLDETLRSLASPSSLQGPELHGWRPPVDCVRANELCAAESNCSSRYRTLRQCLAGRDRNTMLANKECQAALEVLQESPLYDCRCKRGMKKELQCLQIYWSIHLGLTEGEEFYEASPYEPVTSRLSDIFRLASIFSGTGADPVVSAKSNHCLDAAKACNLNDNCKKLRSSYISICNREISPTERCNRRKCHKALRQFFDRVPSEYTYRMLFCSCQDQACAERRRQTILPSCSYEDKEKPNCLDLRGVCRTDHLCRSRLADFHANCRASYQTVTSCPADNYQACLGSYAGMIGFDMTPNYVDSSPTGIVVSPWCSCRGSGNMEEECEKFLRDFTENPCLRNAIQAFGNGTDVNVSPKGPSFQATQAPRVEKTPSLPDDLSDSTSLGTSVITTCTSVQEQGLKANNSKELSMCFTELTTNIIPGSNKVIKPNSGPSRARPSAALTVLSVLMLKLAL.

Residues 1–21 (MILANVFCLFFFLDETLRSLA) form the signal peptide. Cystine bridges form between cysteine 40–cysteine 93, cysteine 95–cysteine 105, cysteine 161–cysteine 222, cysteine 168–cysteine 174, cysteine 185–cysteine 200, cysteine 195–cysteine 241, cysteine 224–cysteine 229, cysteine 251–cysteine 323, cysteine 258–cysteine 264, cysteine 275–cysteine 293, and cysteine 285–cysteine 347. Residue asparagine 52 is glycosylated (N-linked (GlcNAc...) asparagine). Residue asparagine 357 is glycosylated (N-linked (GlcNAc...) asparagine). The disordered stretch occupies residues 363 to 392 (VSPKGPSFQATQAPRVEKTPSLPDDLSDST). Residues 381 to 392 (TPSLPDDLSDST) are compositionally biased toward low complexity. Asparagine 413 carries N-linked (GlcNAc...) asparagine glycosylation. Residue serine 444 is the site of GPI-anchor amidated serine attachment. The propeptide at 445-464 (RARPSAALTVLSVLMLKLAL) is removed in mature form.

Belongs to the GDNFR family. As to quaternary structure, interacts with NRTN ligand and RET: forms a 2:2:2 ternary complex composed of NRTN ligand, GFRA2 and RET receptor. Also forms a 4:4:4 tetrameric complex composed of 4 copies of NRTN ligand, GFRA2 and RET receptor, which prevents endocytosis of RET. Interacts with SORL1. Found in both brain and placenta.

The protein resides in the cell membrane. Receptor for neurturin (NRTN), a growth factor that supports the survival of sympathetic neurons. NRTN-binding leads to autophosphorylation and activation of the RET receptor. Also able to mediate GDNF signaling through the RET tyrosine kinase receptor. Functionally, participates in NRTN-induced 'Ser-727' phosphorylation of STAT3. This is GDNF family receptor alpha-2 (GFRA2) from Homo sapiens (Human).